A 984-amino-acid polypeptide reads, in one-letter code: UPF0592 protein YDL073W (984 aa).

A disordered region spans residues 675–712; the sequence is KNHKIMDGYEGGQENEDNDEDSEDSGSHKNKRKEGNSS. Residues 687–698 are compositionally biased toward acidic residues; the sequence is QENEDNDEDSED.

This sequence belongs to the UPF0592 family.

This chain is UPF0592 protein YDL073W, found in Saccharomyces cerevisiae (strain ATCC 204508 / S288c) (Baker's yeast).